A 60-amino-acid polypeptide reads, in one-letter code: Antimicrobial peptide Eval151 (60 aa).

The N-terminal stretch at 1–23 (MKVLPVLFLTLLVLISIPAETFC) is a signal peptide. The residue at position 36 (Arg-36) is an Arginine amide. Residues 36–54 (RGKRNDFFRSDVSRDDESH) show a composition bias toward basic and acidic residues. The disordered stretch occupies residues 36–60 (RGKRNDFFRSDVSRDDESHPSPGQK). Residues 37-60 (GKRNDFFRSDVSRDDESHPSPGQK) constitute a propeptide that is removed on maturation.

This sequence belongs to the non-disulfide-bridged peptide (NDBP) superfamily. As to expression, expressed by the venom gland.

The protein resides in the secreted. Probable antimicrobial peptide. Has no inhibitory activity against herpes simplex virus type 1 (HSV-1). In Euscorpiops validus (Scorpion), this protein is Antimicrobial peptide Eval151.